The chain runs to 174 residues: NADH-ubiquinone oxidoreductase chain 6 (174 aa).

6 helical membrane passes run Met1 to Ser21, Ser24 to Leu44, Gly47 to Phe67, Val86 to Val106, Gly111 to Gly131, and Trp151 to Ala171.

Belongs to the complex I subunit 6 family. Core subunit of respiratory chain NADH dehydrogenase (Complex I) which is composed of 45 different subunits.

It is found in the mitochondrion inner membrane. It carries out the reaction a ubiquinone + NADH + 5 H(+)(in) = a ubiquinol + NAD(+) + 4 H(+)(out). Core subunit of the mitochondrial membrane respiratory chain NADH dehydrogenase (Complex I) which catalyzes electron transfer from NADH through the respiratory chain, using ubiquinone as an electron acceptor. Essential for the catalytic activity and assembly of complex I. In Pan paniscus (Pygmy chimpanzee), this protein is NADH-ubiquinone oxidoreductase chain 6 (MT-ND6).